Reading from the N-terminus, the 145-residue chain is AP-2 complex subunit sigma (145 aa).

This sequence belongs to the adaptor complexes small subunit family. As to quaternary structure, adaptor protein complex 2 (AP-2) is a heterotetramer composed of two large adaptins (alpha-type subunit apl3 and beta-type subunit apl1), a medium chain (mu-type subunit apm4) and a small adaptin (sigma-type subunit aps2).

It localises to the cell membrane. It is found in the membrane. The protein localises to the coated pit. Its function is as follows. Component of the adaptor complexes which link clathrin to receptors in coated vesicles. Clathrin-associated protein complexes are believed to interact with the cytoplasmic tails of membrane proteins, leading to their selection and concentration. The polypeptide is AP-2 complex subunit sigma (aps2) (Emericella nidulans (strain FGSC A4 / ATCC 38163 / CBS 112.46 / NRRL 194 / M139) (Aspergillus nidulans)).